The following is a 270-amino-acid chain: UBX domain-containing protein 8 (270 aa).

A topological domain (cytoplasmic) is located at residue Met1. Residues 2 to 22 (ASRGVVGIFFLSAVPLVCLEL) traverse the membrane as a helical segment. Topologically, residues 23–33 (RRGIPDIGIKD) are lumenal. Residues 34–54 (FLLLCGRILLLLALLTLIISV) form a helical membrane-spanning segment. Residues 55 to 270 (TTSWLNSFKS…LILEEKEQTN (216 aa)) lie on the Cytoplasmic side of the membrane. The disordered stretch occupies residues 130–171 (SGHKLGGDEGTSQTSFETSNREAAKSQNLPKPLTEFPSPAEQ). The residue at position 167 (Ser167) is a Phosphoserine. The 77-residue stretch at 187 to 263 (TAEEVVTVAL…GITVDTVLIL (77 aa)) folds into the UBX domain.

Interacts with SYVN1 and VCP. Expressed abundantly in ovary and testis, and weakly in all other tissues tested.

The protein localises to the endoplasmic reticulum membrane. Its function is as follows. Involved in endoplasmic reticulum-associated degradation (ERAD) for misfolded lumenal proteins, possibly by tethering VCP to the endoplasmic reticulum membrane. May play a role in reproduction. The sequence is that of UBX domain-containing protein 8 (UBXN8) from Homo sapiens (Human).